Consider the following 570-residue polypeptide: Hydroxylamine reductase (570 aa).

4 residues coordinate [4Fe-4S] cluster: C5, C8, C17, and C23. The hybrid [4Fe-2O-2S] cluster site is built by H266, E290, C334, C425, C453, C478, E513, and K515. At C425 the chain carries Cysteine persulfide.

This sequence belongs to the HCP family. The cofactor is [4Fe-4S] cluster. Hybrid [4Fe-2O-2S] cluster serves as cofactor.

It localises to the cytoplasm. It carries out the reaction A + NH4(+) + H2O = hydroxylamine + AH2 + H(+). In terms of biological role, catalyzes the reduction of hydroxylamine to form NH(3) and H(2)O. In Clostridium botulinum (strain Okra / Type B1), this protein is Hydroxylamine reductase.